Consider the following 443-residue polypeptide: 3-isopropylmalate dehydratase large subunit (443 aa).

[4Fe-4S] cluster-binding residues include C347, C407, and C410.

This sequence belongs to the aconitase/IPM isomerase family. LeuC type 1 subfamily. Heterodimer of LeuC and LeuD. [4Fe-4S] cluster serves as cofactor.

The enzyme catalyses (2R,3S)-3-isopropylmalate = (2S)-2-isopropylmalate. It participates in amino-acid biosynthesis; L-leucine biosynthesis; L-leucine from 3-methyl-2-oxobutanoate: step 2/4. Functionally, catalyzes the isomerization between 2-isopropylmalate and 3-isopropylmalate, via the formation of 2-isopropylmaleate. The sequence is that of 3-isopropylmalate dehydratase large subunit from Buchnera aphidicola subsp. Uroleucon aeneum.